Here is a 363-residue protein sequence, read N- to C-terminus: Ribosomal RNA large subunit methyltransferase M (363 aa).

Residues Ser-190, 223 to 226, Asp-242, Asp-262, and Asp-279 contribute to the S-adenosyl-L-methionine site; that span reads CPGG. Lys-308 acts as the Proton acceptor in catalysis.

It belongs to the class I-like SAM-binding methyltransferase superfamily. RNA methyltransferase RlmE family. RlmM subfamily. Monomer.

The protein localises to the cytoplasm. It carries out the reaction cytidine(2498) in 23S rRNA + S-adenosyl-L-methionine = 2'-O-methylcytidine(2498) in 23S rRNA + S-adenosyl-L-homocysteine + H(+). Its function is as follows. Catalyzes the 2'-O-methylation at nucleotide C2498 in 23S rRNA. This is Ribosomal RNA large subunit methyltransferase M from Aliivibrio salmonicida (strain LFI1238) (Vibrio salmonicida (strain LFI1238)).